Consider the following 115-residue polypeptide: Dolichyl-diphosphooligosaccharide--protein glycosyltransferase subunit DAD1 (115 aa).

Residues 1 to 31 (MARSTSKDAQALIQSLRSAYAATPSNLKIID) lie on the Cytoplasmic side of the membrane. A helical transmembrane segment spans residues 32–52 (LYVVFAVFTALIQVVYMAIVG). Residues 53–55 (SFP) lie on the Lumenal side of the membrane. Residues 56–76 (FNAFLSGLLSCIGTAVLAVCL) form a helical membrane-spanning segment. Topologically, residues 77–94 (RIQVNKENKEFKDLAPER) are cytoplasmic. The chain crosses the membrane as a helical span at residues 95–115 (AFADFVLCNLVLHLVIMNFLG).

This sequence belongs to the DAD/OST2 family. In terms of assembly, component of the oligosaccharyltransferase (OST) complex.

It localises to the endoplasmic reticulum membrane. Its pathway is protein modification; protein glycosylation. In terms of biological role, subunit of the oligosaccharyl transferase (OST) complex that catalyzes the initial transfer of a defined glycan (Glc(3)Man(9)GlcNAc(2) in eukaryotes) from the lipid carrier dolichol-pyrophosphate to an asparagine residue within an Asn-X-Ser/Thr consensus motif in nascent polypeptide chains, the first step in protein N-glycosylation. N-glycosylation occurs cotranslationally and the complex associates with the Sec61 complex at the channel-forming translocon complex that mediates protein translocation across the endoplasmic reticulum (ER). All subunits are required for a maximal enzyme activity. The chain is Dolichyl-diphosphooligosaccharide--protein glycosyltransferase subunit DAD1 (DAD1) from Betula pendula (European white birch).